The chain runs to 437 residues: MSAEAEEDCHSDADRVGDEGNESPAERDLQAQLQMFRAQWMFELTPGVGSSHGETRPCRAGRSSMLKAAADTKGRQELAKEEKARELFLQAVEEEQNGALYEAIKFYRRAMQLVPDIEFKITYTRSPDGDGVGSGYIEENEDASKMADLLSYFQQQLTLQESVLKLCQPELETSQTHISVLPMEVLMYIFRWVVSSDLDLRSLEQLSLVCRGFYICARDPEIWRLACLKVWGRSCMKLVPYASWREMFLERPRVRFDGVYISKTTYIRQGEQSLDGFYRAWHQVEYYRYMRFFPDGHVMMLTTPEEPPSIVPRLRTRNTRTDAILLGHYRLSQDADNQTKVFAVITKKKEEKPLDHKYRYFRRVPVQEADHSFHVGLQLCSSGHQRFNKLIWIHHSCHITYKATGETAVSAFEIDKMYTPLLFARVRSYTAFSERPL.

Residues Met-1–Glu-26 form a disordered region. N-acetylalanine is present on Ser-2. Basic and acidic residues predominate over residues Asp-8–Glu-26. His-10 bears the Phosphoserine mark. The stretch at Ala-84 to Ile-117 is one TPR repeat. Ser-126 carries the phosphoserine modification. The F-box domain occupies Gln-175 to Ala-226.

Part of the SCF (SKP1-CUL1-F-box) E3 ubiquitin-protein ligase complex SCF(FBXO9) composed of CUL1, SKP1, RBX1 and FBXO9. Interacts with TTI1 and TELO2; when TTI1 and TELO2 are phosphorylated by CK2.

It is found in the cytoplasm. The protein operates within protein modification; protein ubiquitination. Substrate recognition component of a SCF (SKP1-CUL1-F-box protein) E3 ubiquitin-protein ligase complex which mediates the ubiquitination and subsequent proteasomal degradation of target proteins and plays a role in several biological processes such as cell cycle, cell proliferation, or maintenance of chromosome stability. Ubiquitinates mTORC1-bound TTI1 and TELO2 when they are phosphorylated by CK2 following growth factor deprivation, leading to their degradation. In contrast, does not mediate ubiquitination of TTI1 and TELO2 when they are part of the mTORC2 complex. As a consequence, mTORC1 is inactivated to restrain cell growth and protein translation, while mTORC2 is the activated due to the relief of feedback inhibition by mTORC1. Plays a role in maintaining epithelial cell survival by regulating the turn-over of chromatin modulator PRMT4 through ubiquitination and degradation by the proteasomal pathway. Also regulates PPARgamma stability by facilitating PPARgamma/PPARG ubiquitination and thereby plays a role in adipocyte differentiation. This Mus musculus (Mouse) protein is F-box only protein 9 (Fbxo9).